Reading from the N-terminus, the 252-residue chain is Triosephosphate isomerase (252 aa).

Residue 9-11 (NWK) participates in substrate binding. His-96 serves as the catalytic Electrophile. The active-site Proton acceptor is Glu-166. Residues Gly-172, Ser-212, and 233–234 (GG) contribute to the substrate site.

The protein belongs to the triosephosphate isomerase family. Homodimer.

The protein resides in the cytoplasm. It carries out the reaction D-glyceraldehyde 3-phosphate = dihydroxyacetone phosphate. It participates in carbohydrate biosynthesis; gluconeogenesis. Its pathway is carbohydrate degradation; glycolysis; D-glyceraldehyde 3-phosphate from glycerone phosphate: step 1/1. Functionally, involved in the gluconeogenesis. Catalyzes stereospecifically the conversion of dihydroxyacetone phosphate (DHAP) to D-glyceraldehyde-3-phosphate (G3P). The sequence is that of Triosephosphate isomerase from Prosthecochloris aestuarii (strain DSM 271 / SK 413).